A 253-amino-acid chain; its full sequence is Glucosamine-6-phosphate deaminase (253 aa).

Residue Asp-65 is the Proton acceptor; for enolization step of the active site. The For ring-opening step role is filled by Asn-133. Residue His-135 is the Proton acceptor; for ring-opening step of the active site. Glu-140 acts as the For ring-opening step in catalysis.

It belongs to the glucosamine/galactosamine-6-phosphate isomerase family. NagB subfamily.

The enzyme catalyses alpha-D-glucosamine 6-phosphate + H2O = beta-D-fructose 6-phosphate + NH4(+). It functions in the pathway amino-sugar metabolism; N-acetylneuraminate degradation; D-fructose 6-phosphate from N-acetylneuraminate: step 5/5. Functionally, catalyzes the reversible isomerization-deamination of glucosamine 6-phosphate (GlcN6P) to form fructose 6-phosphate (Fru6P) and ammonium ion. The polypeptide is Glucosamine-6-phosphate deaminase (Corynebacterium efficiens (strain DSM 44549 / YS-314 / AJ 12310 / JCM 11189 / NBRC 100395)).